A 70-amino-acid chain; its full sequence is Conotoxin AbVIC (70 aa).

Positions 1 to 17 (VLIIAVLFLTACQLTTA) are cleaved as a signal peptide. Residues 18 to 41 (ETSSRGKQKHRALRSTDKNSKLTR) constitute a propeptide that is removed on maturation. Positions 19–41 (TSSRGKQKHRALRSTDKNSKLTR) are disordered. 3 cysteine pairs are disulfide-bonded: Cys43-Cys57, Cys50-Cys61, and Cys56-Cys68.

It belongs to the conotoxin O1 superfamily. Expressed by the venom duct.

Its subcellular location is the secreted. In Conus abbreviatus (Abbreviated cone), this protein is Conotoxin AbVIC.